The following is a 367-amino-acid chain: Glutamate 5-kinase (367 aa).

Lysine 10 is a binding site for ATP. Substrate contacts are provided by serine 50, aspartate 137, and asparagine 149. Residues 169–170 (TD) and 211–217 (TGGMGTK) each bind ATP. Residues 275 to 353 (AGEITVDDGA…QEISEILGYE (79 aa)) enclose the PUA domain.

Belongs to the glutamate 5-kinase family.

It is found in the cytoplasm. It carries out the reaction L-glutamate + ATP = L-glutamyl 5-phosphate + ADP. It participates in amino-acid biosynthesis; L-proline biosynthesis; L-glutamate 5-semialdehyde from L-glutamate: step 1/2. With respect to regulation, proline-mediated feedback inhibition. Functionally, catalyzes the transfer of a phosphate group to glutamate to form L-glutamate 5-phosphate. This Serratia marcescens protein is Glutamate 5-kinase.